The following is a 270-amino-acid chain: 4-hydroxy-tetrahydrodipicolinate reductase (270 aa).

NAD(+) is bound by residues 9–14 (GAGGRM) and glutamate 35. Position 36 (arginine 36) interacts with NADP(+). Residues 99-101 (GTT) and 123-126 (ASNF) contribute to the NAD(+) site. Histidine 156 serves as the catalytic Proton donor/acceptor. A (S)-2,3,4,5-tetrahydrodipicolinate-binding site is contributed by histidine 157. Residue lysine 160 is the Proton donor of the active site. Position 166-167 (166-167 (GT)) interacts with (S)-2,3,4,5-tetrahydrodipicolinate.

It belongs to the DapB family.

Its subcellular location is the cytoplasm. It catalyses the reaction (S)-2,3,4,5-tetrahydrodipicolinate + NAD(+) + H2O = (2S,4S)-4-hydroxy-2,3,4,5-tetrahydrodipicolinate + NADH + H(+). The catalysed reaction is (S)-2,3,4,5-tetrahydrodipicolinate + NADP(+) + H2O = (2S,4S)-4-hydroxy-2,3,4,5-tetrahydrodipicolinate + NADPH + H(+). It participates in amino-acid biosynthesis; L-lysine biosynthesis via DAP pathway; (S)-tetrahydrodipicolinate from L-aspartate: step 4/4. Catalyzes the conversion of 4-hydroxy-tetrahydrodipicolinate (HTPA) to tetrahydrodipicolinate. This is 4-hydroxy-tetrahydrodipicolinate reductase from Haemophilus influenzae (strain PittEE).